The following is a 452-amino-acid chain: Proline--tRNA ligase (452 aa).

The protein belongs to the class-II aminoacyl-tRNA synthetase family. ProS type 2 subfamily. Homodimer.

The protein resides in the cytoplasm. The catalysed reaction is tRNA(Pro) + L-proline + ATP = L-prolyl-tRNA(Pro) + AMP + diphosphate. Catalyzes the attachment of proline to tRNA(Pro) in a two-step reaction: proline is first activated by ATP to form Pro-AMP and then transferred to the acceptor end of tRNA(Pro). The chain is Proline--tRNA ligase from Jannaschia sp. (strain CCS1).